Here is a 142-residue protein sequence, read N- to C-terminus: MMLKTVIYTGVLFLICNKVLVRADPLYSPYSSKDLANLKTLLERFEDTLGQDEGNDNQQDYDIANPEAEGPQAGSPWDRERERQWPASDYKKPQEGYQSQSSRLRDLLMAPRNNRGSSGCFGSRIDRIGSMSSMGCGGSRKG.

The first 23 residues, Met1–Ala23, serve as a signal peptide directing secretion. The propeptide occupies Asp24–Arg112. Positions Asp47–Ser123 are disordered. The span at Trp77 to Gln94 shows a compositional bias: basic and acidic residues. The cysteines at positions 120 and 136 are disulfide-linked.

It belongs to the natriuretic peptide family. Cleaved upon secretion to produce the functional hormone. Expressed in heart atrium and to a lower extent in heart ventricle, but not in brain.

It localises to the secreted. Functionally, hormone playing a key role in cardiovascular homeostasis through regulation of natriuresis, diuresis, and vasodilation. Has a cGMP-stimulating activity. In Acipenser transmontanus (White sturgeon), this protein is Natriuretic peptides A (nppa).